The sequence spans 267 residues: Tryptophan synthase alpha chain (267 aa).

Active-site proton acceptor residues include E43 and D54.

This sequence belongs to the TrpA family. As to quaternary structure, tetramer of two alpha and two beta chains.

The enzyme catalyses (1S,2R)-1-C-(indol-3-yl)glycerol 3-phosphate + L-serine = D-glyceraldehyde 3-phosphate + L-tryptophan + H2O. It functions in the pathway amino-acid biosynthesis; L-tryptophan biosynthesis; L-tryptophan from chorismate: step 5/5. Functionally, the alpha subunit is responsible for the aldol cleavage of indoleglycerol phosphate to indole and glyceraldehyde 3-phosphate. The protein is Tryptophan synthase alpha chain of Bacillus pumilus (strain SAFR-032).